The chain runs to 179 residues: Repressor of phase 1 flagellin gene (179 aa).

Functionally, transcriptional repressor of the FliC phase-1 flagellin. This chain is Repressor of phase 1 flagellin gene (fljA), found in Salmonella abortus-equi.